The chain runs to 375 residues: Ornithine transcarbamylase, chloroplastic (375 aa).

A chloroplast-targeting transit peptide spans 1 to 53 (MAAAMASHVSTARSPALSFSSSSSSFFPGTTLRRFSAVSLPSPALPRLRVSCQ). Residue Ala-54 is modified to N-acetylalanine. Residues 123–126 (SMRT), Arg-174, His-201, and Gln-204 each bind carbamoyl phosphate. Asn-232, Asp-293, Ser-297, and Met-298 together coordinate L-ornithine. The Proton acceptor role is filled by Cys-333. Residues 333 to 334 (CL) and Arg-361 contribute to the carbamoyl phosphate site.

The protein belongs to the aspartate/ornithine carbamoyltransferase superfamily. OTCase family.

The protein localises to the plastid. It localises to the chloroplast. The enzyme catalyses carbamoyl phosphate + L-ornithine = L-citrulline + phosphate + H(+). This Arabidopsis thaliana (Mouse-ear cress) protein is Ornithine transcarbamylase, chloroplastic (OTC).